Reading from the N-terminus, the 200-residue chain is LexA repressor (200 aa).

Positions 27 to 47 form a DNA-binding region, H-T-H motif; sequence VREICNAVELRSTSTVHGHLK. Catalysis depends on for autocatalytic cleavage activity residues serine 124 and lysine 161.

Belongs to the peptidase S24 family. Homodimer.

It carries out the reaction Hydrolysis of Ala-|-Gly bond in repressor LexA.. Its function is as follows. Represses a number of genes involved in the response to DNA damage (SOS response), including recA and lexA. In the presence of single-stranded DNA, RecA interacts with LexA causing an autocatalytic cleavage which disrupts the DNA-binding part of LexA, leading to derepression of the SOS regulon and eventually DNA repair. The polypeptide is LexA repressor (Clostridium tetani (strain Massachusetts / E88)).